The primary structure comprises 358 residues: RuBisCO accumulation factor 1 (358 aa).

The interval 11–194 (VSAAEAAELI…RQAIEKLLTD (184 aa)) is N-terminal alpha-helix. The segment at 218-344 (ARLIPVAGTF…VVLVLRPKKI (127 aa)) is C-terminal beta-sheet.

This sequence belongs to the RAF family. Homodimer. Forms an RbcL(8)-Raf1(8) complex. Forms complexes of many stoichiometries with RbcL with and without RbcS. RbcX and Raf1 can bind simultaneously to RbcL. Interacts with both RuBisCO subunits (ccbL, ccbS), GroEL, DnaK and alpha and beta phycocyanin (cpcA, cpcB) in pull-down experiments with tagged protein. C-terminally tagged Raf1 does not interact with either RuBisCO subunit, suggesting its C-terminus is involved in binding.

Its subcellular location is the cytoplasm. Its function is as follows. A major RuBisCO chaperone. Acts after GroEL-GroES chaperonin to fold and/or assemble the large subunit of RuBisCO (ccbL, rbcL). Cooperates with RbcX in RbcL folding, plays the major role in assembly of dimers into RbcL(8)-Raf1(8) intermediate complexes. RbcS replaces Raf1, leading to holoenzyme formation. Functionally, required for optimal reconstitution of RbcL(8) upon expression in E.coli. Has been suggested to be involved in RuBisCO recycling and homeostasis rather than assembly. The chain is RuBisCO accumulation factor 1 from Synechocystis sp. (strain ATCC 27184 / PCC 6803 / Kazusa).